The following is a 122-amino-acid chain: Large ribosomal subunit protein uL14 (122 aa).

It belongs to the universal ribosomal protein uL14 family. In terms of assembly, part of the 50S ribosomal subunit. Forms a cluster with proteins L3 and L19. In the 70S ribosome, L14 and L19 interact and together make contacts with the 16S rRNA in bridges B5 and B8.

Its function is as follows. Binds to 23S rRNA. Forms part of two intersubunit bridges in the 70S ribosome. The polypeptide is Large ribosomal subunit protein uL14 (Mycobacterium leprae (strain TN)).